A 430-amino-acid polypeptide reads, in one-letter code: KICSTOR complex protein kaptin (430 aa).

The interval 410-430 is disordered; that stretch reads RKHQQGLGDRVGPRPVEHPAS. Residues 420–430 show a composition bias toward basic and acidic residues; that stretch reads VGPRPVEHPAS.

Part of the KICSTOR complex composed of KPTN, ITFG2, KICS2 and SZT2. SZT2 probably serves as a link between the other three proteins in the KICSTOR complex and mediates the direct interaction with the GATOR1 complex. May associate with F-actin filaments.

It is found in the lysosome membrane. The protein localises to the cell projection. Its subcellular location is the lamellipodium. It localises to the stereocilium. In terms of biological role, as part of the KICSTOR complex functions in the amino acid-sensing branch of the TORC1 signaling pathway. Recruits, in an amino acid-independent manner, the GATOR1 complex to the lysosomal membranes and allows its interaction with GATOR2 and the RAG GTPases. Functions upstream of the RAG GTPases and is required to negatively regulate mTORC1 signaling in absence of amino acids. In absence of the KICSTOR complex mTORC1 is constitutively localized to the lysosome and activated. The KICSTOR complex is also probably involved in the regulation of mTORC1 by glucose. This is KICSTOR complex protein kaptin from Mus musculus (Mouse).